The sequence spans 155 residues: Small ribosomal subunit protein uS7c (155 aa).

This sequence belongs to the universal ribosomal protein uS7 family. In terms of assembly, part of the 30S ribosomal subunit.

The protein resides in the plastid. It is found in the chloroplast. Its function is as follows. One of the primary rRNA binding proteins, it binds directly to 16S rRNA where it nucleates assembly of the head domain of the 30S subunit. The polypeptide is Small ribosomal subunit protein uS7c (rps7) (Houttuynia cordata (Chameleon plant)).